We begin with the raw amino-acid sequence, 34 residues long: Conotoxin Cl6d (34 aa).

Cystine bridges form between Cys4-Cys19, Cys12-Cys29, and Cys18-Cys33. A 4-hydroxyproline mark is found at Pro14 and Pro21.

Expressed by the venom duct.

It localises to the secreted. The sequence is that of Conotoxin Cl6d from Californiconus californicus (California cone).